The sequence spans 836 residues: MIAELLSSALGLLLYLNTLGADFCYDDSRAIKTNQDLLPETPWNHIFFNDFWGTLLTHSGSHKSYRPLCTLSFRLNYLFGGLDPWNYHLVNVLLHSAVTGLFTNLCKALFGSGCWTLIAGLLFASHPIHTEAVSGIVGRADVGSGLFFLLSLLCYMKHCSTRGYSLSSWCWILCAGFWAACSMLWKEQGVTVLAVSAVYDVFVFHKLKMNQIISVVFKEKNVSFFFSVGLLFAWGVILLGARFYWMGNTPPSFSNSDNPAADCEVLLTRTLTFFYLPTKNLWLLFCPDTLSFDWSMDAVPLIKTITDWRNIHTVAFYILLILLAYSSLKGSAIKRDCNGKVFMNGKQNTNGHSCQSDLEHKNAEQNPVIASKLENGVKHHNSHEMQLPSTENIVVLALSLLIVPFVPASNLFFYVGFVIAERVLYIPSMGFCLLVTVGARALYIKAQKNILKNLLFYATAALIVFYGLKTVVRNGDWKNEEMLYRSGIKVNPAKAWGNLGNVLKSQSKIDEAENAYRNALYYRSNMADMLYNLGLLLQENSKFSEALHYYKLAIGSRPTLASGYLNTGIILMNQGRTEEARRTFLKCSEIPDENLKDPNAHKSSVTSCLYNLGKLYHEQGQYEDALIVYKEAIQKMPRQFSPQSLYNMMGEAYMRLNVVSEAEHWYTESLKSKPDHIPAHLTYGKLLTLTGRKNEAERYFLKAIQLDPNKGNCYMHYGQFLLEEGRILEAAEMAKKAAELDSSEFDVVFNAAHMLRQASLNEEAEKFYKLAAGLRQNYPAALMNLGAILHLNGKLEEAEYNYLRALQLKPDDAITQSNLRKLWNIMEKQGLKNSKT.

A helical transmembrane segment spans residues 1–21; it reads MIAELLSSALGLLLYLNTLGA. At 22–77 the chain is on the extracellular side; that stretch reads DFCYDDSRAIKTNQDLLPETPWNHIFFNDFWGTLLTHSGSHKSYRPLCTLSFRLNY. A helical membrane pass occupies residues 78–98; that stretch reads LFGGLDPWNYHLVNVLLHSAV. Residues 99-107 lie on the Cytoplasmic side of the membrane; it reads TGLFTNLCK. A helical membrane pass occupies residues 108-128; sequence ALFGSGCWTLIAGLLFASHPI. Residues 129–132 lie on the Extracellular side of the membrane; it reads HTEA. Residues 133–153 form a helical membrane-spanning segment; it reads VSGIVGRADVGSGLFFLLSLL. Over 154 to 164 the chain is Cytoplasmic; that stretch reads CYMKHCSTRGY. The chain crosses the membrane as a helical span at residues 165–185; it reads SLSSWCWILCAGFWAACSMLW. At 186-188 the chain is on the extracellular side; that stretch reads KEQ. Residues 189 to 209 form a helical membrane-spanning segment; sequence GVTVLAVSAVYDVFVFHKLKM. Over 210–220 the chain is Cytoplasmic; the sequence is NQIISVVFKEK. A helical membrane pass occupies residues 221-241; sequence NVSFFFSVGLLFAWGVILLGA. Topologically, residues 242–312 are extracellular; the sequence is RFYWMGNTPP…KTITDWRNIH (71 aa). A helical membrane pass occupies residues 313–333; sequence TVAFYILLILLAYSSLKGSAI. Over 334 to 392 the chain is Cytoplasmic; the sequence is KRDCNGKVFMNGKQNTNGHSCQSDLEHKNAEQNPVIASKLENGVKHHNSHEMQLPSTEN. The chain crosses the membrane as a helical span at residues 393-413; sequence IVVLALSLLIVPFVPASNLFF. Residue Y414 is a topological domain, extracellular. The helical transmembrane segment at 415 to 435 threads the bilayer; sequence VGFVIAERVLYIPSMGFCLLV. At 436 to 449 the chain is on the cytoplasmic side; sequence TVGARALYIKAQKN. A helical transmembrane segment spans residues 450–470; sequence ILKNLLFYATAALIVFYGLKT. Over 471–836 the chain is Extracellular; it reads VVRNGDWKNE…EKQGLKNSKT (366 aa). 9 TPR repeats span residues 493 to 526, 527 to 560, 561 to 594, 606 to 639, 643 to 676, 677 to 710, 711 to 744, 745 to 778, and 779 to 812; these read AKAW…RSNM, ADML…RPTL, ASGY…PDEN, TSCL…MPRQ, QSLY…KPDH, IPAH…DPNK, GNCY…DSSE, FDVV…RQNY, and PAAL…KPDD.

The protein belongs to the TMTC family.

The protein resides in the membrane. It is found in the endoplasmic reticulum. It catalyses the reaction a di-trans,poly-cis-dolichyl beta-D-mannosyl phosphate + L-seryl-[protein] = 3-O-(alpha-D-mannosyl)-L-seryl-[protein] + a di-trans,poly-cis-dolichyl phosphate + H(+). The catalysed reaction is a di-trans,poly-cis-dolichyl beta-D-mannosyl phosphate + L-threonyl-[protein] = 3-O-(alpha-D-mannosyl)-L-threonyl-[protein] + a di-trans,poly-cis-dolichyl phosphate + H(+). The protein operates within protein modification; protein glycosylation. Transfers mannosyl residues to the hydroxyl group of serine or threonine residues. The sequence is that of Protein O-mannosyl-transferase tmtc2 (tmtc2) from Xenopus laevis (African clawed frog).